A 631-amino-acid chain; its full sequence is UvrABC system protein C (631 aa).

The GIY-YIG domain maps to 26 to 105 (SSPGVYQFKN…IKELKPRYNV (80 aa)). Residues 219–254 (SATIRSLNERMLSFAKELKFEQAAELKTQIDSLKRY) form the UVR domain.

It belongs to the UvrC family. Interacts with UvrB in an incision complex.

It localises to the cytoplasm. In terms of biological role, the UvrABC repair system catalyzes the recognition and processing of DNA lesions. UvrC both incises the 5' and 3' sides of the lesion. The N-terminal half is responsible for the 3' incision and the C-terminal half is responsible for the 5' incision. The chain is UvrABC system protein C from Chlorobium phaeobacteroides (strain DSM 266 / SMG 266 / 2430).